The chain runs to 361 residues: Probable dual-specificity RNA methyltransferase RlmN (361 aa).

Glu91 functions as the Proton acceptor in the catalytic mechanism. One can recognise a Radical SAM core domain in the interval 97–329; the sequence is QHYGLSVCVT…KKKGGNCVVR (233 aa). A disulfide bond links Cys104 and Cys340. [4Fe-4S] cluster contacts are provided by Cys111, Cys115, and Cys118. S-adenosyl-L-methionine contacts are provided by residues 163 to 164, Ser195, 218 to 220, and Asn296; these read GE and SLH. Catalysis depends on Cys340, which acts as the S-methylcysteine intermediate.

It belongs to the radical SAM superfamily. RlmN family. The cofactor is [4Fe-4S] cluster.

The protein resides in the cytoplasm. It carries out the reaction adenosine(2503) in 23S rRNA + 2 reduced [2Fe-2S]-[ferredoxin] + 2 S-adenosyl-L-methionine = 2-methyladenosine(2503) in 23S rRNA + 5'-deoxyadenosine + L-methionine + 2 oxidized [2Fe-2S]-[ferredoxin] + S-adenosyl-L-homocysteine. It catalyses the reaction adenosine(37) in tRNA + 2 reduced [2Fe-2S]-[ferredoxin] + 2 S-adenosyl-L-methionine = 2-methyladenosine(37) in tRNA + 5'-deoxyadenosine + L-methionine + 2 oxidized [2Fe-2S]-[ferredoxin] + S-adenosyl-L-homocysteine. Functionally, specifically methylates position 2 of adenine 2503 in 23S rRNA and position 2 of adenine 37 in tRNAs. This chain is Probable dual-specificity RNA methyltransferase RlmN, found in Streptococcus pneumoniae serotype 2 (strain D39 / NCTC 7466).